The chain runs to 1501 residues: Ribulose bisphosphate carboxylase (1501 aa).

Position 111 (Asn-111) interacts with substrate. Lys-166 acts as the Proton acceptor in catalysis. Lys-168 lines the substrate pocket. Lys-191, Asp-193, and Glu-194 together coordinate Mg(2+). The residue at position 191 (Lys-191) is an N6-carboxylysine. His-287 serves as the catalytic Proton acceptor. Residues Arg-288, His-321, and Ser-368 each coordinate substrate. The propeptide at 486-508 (SAAAFVGASVAPAKKENVVARQA) is linker. Asn-619 is a binding site for substrate. Lys-674 serves as the catalytic Proton acceptor. Lys-676 provides a ligand contact to substrate. Residues Lys-699, Asp-701, and Glu-702 each contribute to the Mg(2+) site. An N6-carboxylysine modification is found at Lys-699. Catalysis depends on His-795, which acts as the Proton acceptor. Substrate is bound by residues Arg-796, His-829, and Ser-876. The propeptide at 994–1016 (SAAAFVGASVAPAKKENVVARQA) is linker. Asn-1127 is a substrate binding site. Lys-1182 serves as the catalytic Proton acceptor. Lys-1184 contributes to the substrate binding site. 3 residues coordinate Mg(2+): Lys-1207, Asp-1209, and Glu-1210. Residue Lys-1207 is modified to N6-carboxylysine. His-1303 acts as the Proton acceptor in catalysis. Positions 1304, 1337, and 1384 each coordinate substrate.

The protein belongs to the RuBisCO large chain family. Type II subfamily. Homodimer. It depends on Mg(2+) as a cofactor.

The protein localises to the plastid. It localises to the chloroplast. It catalyses the reaction 2 (2R)-3-phosphoglycerate + 2 H(+) = D-ribulose 1,5-bisphosphate + CO2 + H2O. The catalysed reaction is D-ribulose 1,5-bisphosphate + O2 = 2-phosphoglycolate + (2R)-3-phosphoglycerate + 2 H(+). Its function is as follows. RuBisCO catalyzes two reactions: the carboxylation of D-ribulose 1,5-bisphosphate, the primary event in carbon dioxide fixation, as well as the oxidative fragmentation of the pentose substrate. Both reactions occur simultaneously and in competition at the same active site. The chain is Ribulose bisphosphate carboxylase (rbcL) from Symbiodinium sp. (Dinoflagellate).